The following is a 637-amino-acid chain: Phosphomethylpyrimidine synthase (637 aa).

Residues asparagine 242, methionine 271, tyrosine 300, histidine 336, 356–358 (SRG), 397–400 (DGLR), and glutamate 436 each bind substrate. Histidine 440 contributes to the Zn(2+) binding site. Tyrosine 463 is a binding site for substrate. Histidine 504 serves as a coordination point for Zn(2+). Positions 584, 587, and 592 each coordinate [4Fe-4S] cluster.

The protein belongs to the ThiC family. As to quaternary structure, homodimer. The cofactor is [4Fe-4S] cluster.

It catalyses the reaction 5-amino-1-(5-phospho-beta-D-ribosyl)imidazole + S-adenosyl-L-methionine = 4-amino-2-methyl-5-(phosphooxymethyl)pyrimidine + CO + 5'-deoxyadenosine + formate + L-methionine + 3 H(+). Its pathway is cofactor biosynthesis; thiamine diphosphate biosynthesis. Catalyzes the synthesis of the hydroxymethylpyrimidine phosphate (HMP-P) moiety of thiamine from aminoimidazole ribotide (AIR) in a radical S-adenosyl-L-methionine (SAM)-dependent reaction. This is Phosphomethylpyrimidine synthase from Janthinobacterium sp. (strain Marseille) (Minibacterium massiliensis).